We begin with the raw amino-acid sequence, 238 residues long: Ribosomal RNA small subunit methyltransferase G (238 aa).

S-adenosyl-L-methionine-binding positions include G77, F82, 128-129, and R147; that span reads AE.

Belongs to the methyltransferase superfamily. RNA methyltransferase RsmG family.

It is found in the cytoplasm. Specifically methylates the N7 position of guanine in position 535 of 16S rRNA. The polypeptide is Ribosomal RNA small subunit methyltransferase G (Exiguobacterium sp. (strain ATCC BAA-1283 / AT1b)).